The sequence spans 131 residues: Small ribosomal subunit protein uS11 (131 aa).

The protein belongs to the universal ribosomal protein uS11 family. Part of the 30S ribosomal subunit. Interacts with proteins S7 and S18. Binds to IF-3.

Functionally, located on the platform of the 30S subunit, it bridges several disparate RNA helices of the 16S rRNA. Forms part of the Shine-Dalgarno cleft in the 70S ribosome. The protein is Small ribosomal subunit protein uS11 of Helicobacter pylori (strain P12).